A 428-amino-acid chain; its full sequence is 3-phosphoshikimate 1-carboxyvinyltransferase (428 aa).

3-phosphoshikimate-binding residues include lysine 23, serine 24, and arginine 28. Residue lysine 23 coordinates phosphoenolpyruvate. Phosphoenolpyruvate is bound by residues glycine 97 and arginine 125. Positions 170, 171, 172, 198, 314, 337, and 341 each coordinate 3-phosphoshikimate. Residue glutamine 172 coordinates phosphoenolpyruvate. Residue aspartate 314 is the Proton acceptor of the active site. Phosphoenolpyruvate contacts are provided by arginine 345, arginine 387, and lysine 412.

Belongs to the EPSP synthase family. In terms of assembly, monomer.

It localises to the cytoplasm. The catalysed reaction is 3-phosphoshikimate + phosphoenolpyruvate = 5-O-(1-carboxyvinyl)-3-phosphoshikimate + phosphate. Its pathway is metabolic intermediate biosynthesis; chorismate biosynthesis; chorismate from D-erythrose 4-phosphate and phosphoenolpyruvate: step 6/7. Functionally, catalyzes the transfer of the enolpyruvyl moiety of phosphoenolpyruvate (PEP) to the 5-hydroxyl of shikimate-3-phosphate (S3P) to produce enolpyruvyl shikimate-3-phosphate and inorganic phosphate. This chain is 3-phosphoshikimate 1-carboxyvinyltransferase, found in Edwardsiella ictaluri (strain 93-146).